Consider the following 166-residue polypeptide: Ribosome-binding factor A (166 aa).

The tract at residues 122 to 166 is disordered; sequence LASTAEHAGDADPYRVDTEDDDDDTDGADAEARSDADVRRGPQSG. Over residues 128 to 138 the composition is skewed to basic and acidic residues; sequence HAGDADPYRVD. Positions 139–150 are enriched in acidic residues; that stretch reads TEDDDDDTDGAD. Basic and acidic residues predominate over residues 151–166; it reads AEARSDADVRRGPQSG.

Belongs to the RbfA family. As to quaternary structure, monomer. Binds 30S ribosomal subunits, but not 50S ribosomal subunits or 70S ribosomes.

It is found in the cytoplasm. In terms of biological role, one of several proteins that assist in the late maturation steps of the functional core of the 30S ribosomal subunit. Associates with free 30S ribosomal subunits (but not with 30S subunits that are part of 70S ribosomes or polysomes). Required for efficient processing of 16S rRNA. May interact with the 5'-terminal helix region of 16S rRNA. The protein is Ribosome-binding factor A of Saccharopolyspora erythraea (strain ATCC 11635 / DSM 40517 / JCM 4748 / NBRC 13426 / NCIMB 8594 / NRRL 2338).